A 245-amino-acid polypeptide reads, in one-letter code: 1-(5-phosphoribosyl)-5-[(5-phosphoribosylamino)methylideneamino] imidazole-4-carboxamide isomerase (245 aa).

Aspartate 7 (proton acceptor) is an active-site residue. The Proton donor role is filled by aspartate 129.

This sequence belongs to the HisA/HisF family.

The protein resides in the cytoplasm. The enzyme catalyses 1-(5-phospho-beta-D-ribosyl)-5-[(5-phospho-beta-D-ribosylamino)methylideneamino]imidazole-4-carboxamide = 5-[(5-phospho-1-deoxy-D-ribulos-1-ylimino)methylamino]-1-(5-phospho-beta-D-ribosyl)imidazole-4-carboxamide. It participates in amino-acid biosynthesis; L-histidine biosynthesis; L-histidine from 5-phospho-alpha-D-ribose 1-diphosphate: step 4/9. The chain is 1-(5-phosphoribosyl)-5-[(5-phosphoribosylamino)methylideneamino] imidazole-4-carboxamide isomerase from Escherichia coli (strain SMS-3-5 / SECEC).